The chain runs to 102 residues: Protein CASC2, isoform 3 (102 aa).

In terms of tissue distribution, expressed in normal and neoplastic endometrial tissues.

Functionally, may act as a potential tumor suppressor. The chain is Protein CASC2, isoform 3 (CASC2) from Homo sapiens (Human).